We begin with the raw amino-acid sequence, 454 residues long: tRNA modification GTPase MnmE (454 aa).

Arg23, Glu80, and Lys120 together coordinate (6S)-5-formyl-5,6,7,8-tetrahydrofolate. The TrmE-type G domain maps to 216 to 377 (GMKVVIAGRP…LRDHLKQSMG (162 aa)). Asn226 contacts K(+). GTP is bound by residues 226-231 (NAGKSS), 245-251 (TDIAGTT), 270-273 (DTAG), 335-338 (NKAD), and 358-360 (SAR). Ser230 contacts Mg(2+). Residues Thr245, Ile247, and Thr250 each contribute to the K(+) site. Residue Thr251 coordinates Mg(2+). Lys454 lines the (6S)-5-formyl-5,6,7,8-tetrahydrofolate pocket.

This sequence belongs to the TRAFAC class TrmE-Era-EngA-EngB-Septin-like GTPase superfamily. TrmE GTPase family. Homodimer. Heterotetramer of two MnmE and two MnmG subunits. It depends on K(+) as a cofactor.

The protein resides in the cytoplasm. Exhibits a very high intrinsic GTPase hydrolysis rate. Involved in the addition of a carboxymethylaminomethyl (cmnm) group at the wobble position (U34) of certain tRNAs, forming tRNA-cmnm(5)s(2)U34. This chain is tRNA modification GTPase MnmE, found in Pectobacterium carotovorum subsp. carotovorum (strain PC1).